A 476-amino-acid chain; its full sequence is Protein DETOXIFICATION 1 (476 aa).

The next 12 membrane-spanning stretches (helical) occupy residues 35–55 (AAPM…SVMV), 66–86 (GVAL…CGLV), 117–137 (IPIC…LISL), 146–166 (IAGS…IVIP), 184–204 (AVTT…LFGL), 208–228 (GPAM…SCYV), 260–280 (AAMI…SGLL), 289–309 (VLSI…GVAA), 331–351 (VLAG…LLFT), 370–390 (VADL…TAVL), 402–422 (IGAW…GIYL), and 433–453 (LWCG…IVTA).

It belongs to the multi antimicrobial extrusion (MATE) (TC 2.A.66.1) family. In terms of tissue distribution, ubiquitous. Highest expression in flowers and stems.

The protein localises to the cell membrane. Efflux carrier for plant-derived alkaloids, antibiotics, heavy metal and other toxic compounds. Involved in cadmium detoxification. Requires probably a proton-motive force for the efflux. This is Protein DETOXIFICATION 1 from Arabidopsis thaliana (Mouse-ear cress).